A 217-amino-acid chain; its full sequence is Pyridoxine/pyridoxamine 5'-phosphate oxidase (217 aa).

FMN-binding positions include 66 to 71 (RMVLLK), 81 to 82 (FT), Arg87, Lys88, and Gln110. Lys71 lines the substrate pocket. The substrate site is built by Tyr128, Arg132, and Ser136. FMN is bound by residues 145 to 146 (QS) and Trp190. 196–198 (RLH) contacts substrate. Arg200 is an FMN binding site.

It belongs to the pyridoxamine 5'-phosphate oxidase family. Homodimer. FMN serves as cofactor.

The catalysed reaction is pyridoxamine 5'-phosphate + O2 + H2O = pyridoxal 5'-phosphate + H2O2 + NH4(+). The enzyme catalyses pyridoxine 5'-phosphate + O2 = pyridoxal 5'-phosphate + H2O2. The protein operates within cofactor metabolism; pyridoxal 5'-phosphate salvage; pyridoxal 5'-phosphate from pyridoxamine 5'-phosphate: step 1/1. It functions in the pathway cofactor metabolism; pyridoxal 5'-phosphate salvage; pyridoxal 5'-phosphate from pyridoxine 5'-phosphate: step 1/1. Catalyzes the oxidation of either pyridoxine 5'-phosphate (PNP) or pyridoxamine 5'-phosphate (PMP) into pyridoxal 5'-phosphate (PLP). The chain is Pyridoxine/pyridoxamine 5'-phosphate oxidase from Colwellia psychrerythraea (strain 34H / ATCC BAA-681) (Vibrio psychroerythus).